We begin with the raw amino-acid sequence, 275 residues long: Phosphonoacetaldehyde hydrolase (275 aa).

Asp-15 functions as the Nucleophile in the catalytic mechanism. Mg(2+) is bound by residues Asp-15 and Ala-17. Lys-56 acts as the Schiff-base intermediate with substrate in catalysis. A Mg(2+)-binding site is contributed by Asp-189.

It belongs to the HAD-like hydrolase superfamily. PhnX family. In terms of assembly, homodimer. It depends on Mg(2+) as a cofactor.

The catalysed reaction is phosphonoacetaldehyde + H2O = acetaldehyde + phosphate + H(+). In terms of biological role, involved in phosphonate degradation. In Pseudomonas putida (strain W619), this protein is Phosphonoacetaldehyde hydrolase.